Reading from the N-terminus, the 68-residue chain is Gallinacin-10 (68 aa).

Residues M1 to P19 form the signal peptide. Residues G20–L25 constitute a propeptide that is removed on maturation. Cystine bridges form between C32–C61, C39–C54, and C44–C62.

The protein belongs to the beta-defensin family. As to expression, strong expression in the testis, liver, gall bladder and kidney. Also expressed in the ovary and male and female reproductive tracts. Expressed in the ovarian stroma and the theca and granulosa layers of the ovarian follicle.

The protein resides in the secreted. The protein localises to the cytoplasmic granule. In terms of biological role, has bactericidal activity. This Gallus gallus (Chicken) protein is Gallinacin-10 (GAL10).